A 1085-amino-acid chain; its full sequence is Extracellular calcium-sensing receptor (1085 aa).

The signal sequence occupies residues 1 to 19; it reads MALYSCCWILLAFSTWCTS. Residues 20–611 lie on the Extracellular side of the membrane; the sequence is AYGPDQRAQK…KEIEFLSWTE (592 aa). Positions 23-189 are ligand-binding 1 (LB1); it reads PDQRAQKKGD…QFKSFLRTIP (167 aa). A disulfide bond links Cys-61 and Cys-102. Phosphate is bound at residue 67 to 71; the sequence is RGFRW. Positions 82, 85, 88, and 89 each coordinate Ca(2+). A glycan (N-linked (GlcNAc...) asparagine) is linked at Asn-91. Thr-101 lines the Ca(2+) pocket. Asn-131 carries N-linked (GlcNAc...) asparagine glycosylation. Thr-146 serves as a coordination point for Ca(2+). Residues Ser-148, Ala-169, and Ser-171 each contribute to the L-tryptophan site. Ca(2+)-binding residues include Ser-171, Pro-189, Asp-191, Glu-232, and Asp-235. The tract at residues 190 to 325 is ligand-binding 2 (LB2); that stretch reads NDEHQATAMA…GGTIGFGLKA (136 aa). 7 disulfide bridges follow: Cys-237/Cys-562, Cys-359/Cys-396, Cys-438/Cys-450, Cys-543/Cys-563, Cys-547/Cys-566, Cys-569/Cys-583, and Cys-586/Cys-599. Spermine-binding residues include Asp-239 and Ser-241. N-linked (GlcNAc...) asparagine glycosylation is found at Asn-262 and Asn-288. Glu-298 contacts Ca(2+). Residue Glu-298 participates in L-tryptophan binding. N-linked (GlcNAc...) asparagine glycosylation occurs at Asn-401. Residue 416–418 coordinates phosphate; that stretch reads RIS. N-linked (GlcNAc...) asparagine glycans are attached at residues Asn-447, Asn-469, and Asn-489. Residue Tyr-490 coordinates Ca(2+). The N-linked (GlcNAc...) asparagine glycan is linked to Asn-542. The cysteine-rich (CR) stretch occupies residues 543–613; it reads CSRDCLAGTR…IEFLSWTEPF (71 aa). Residue Gly-558 coordinates Ca(2+). A glycan (N-linked (GlcNAc...) asparagine) is linked at Asn-595. The chain crosses the membrane as a helical span at residues 612–637; that stretch reads PFGIALTLFAVLGIFLTAFVLGVFIK. Topologically, residues 638–649 are cytoplasmic; it reads FRNTPIVKATNR. An intracellular loop 1 (ICL1) region spans residues 638–649; that stretch reads FRNTPIVKATNR. The chain crosses the membrane as a helical span at residues 650-669; it reads ELSYLLLFSLLCCFSSSLFF. The Extracellular segment spans residues 670–675; it reads IGEPQD. The chain crosses the membrane as a helical span at residues 676–699; the sequence is WTCRLRQPAFGISFVLCISCILVK. Residues 700–723 lie on the Cytoplasmic side of the membrane; it reads TNRVLLVFEAKIPTSFHRKWWGLN. An intracellular loop 2 (ICL2) region spans residues 700–723; that stretch reads TNRVLLVFEAKIPTSFHRKWWGLN. A helical transmembrane segment spans residues 724-746; sequence LQFLLVFLCTFMQIVICAIWLNT. Residues 747–770 lie on the Extracellular side of the membrane; sequence APPSSYRNHELEDEIIFITCHEGS. The helical transmembrane segment at 771 to 790 threads the bilayer; the sequence is LMALGFLIGYTCLLAAICFF. Over 791 to 806 the chain is Cytoplasmic; the sequence is FAFKSRKLPENFNEAK. The tract at residues 791–806 is intracellular loop 3 (ICL3); it reads FAFKSRKLPENFNEAK. The helical transmembrane segment at 807-829 threads the bilayer; that stretch reads FITFSMLIFFIVWISFIPAYAST. At 830–833 the chain is on the extracellular side; the sequence is YGKF. Residues 834–855 form a helical membrane-spanning segment; it reads VSAVEVIAILAASFGLLACIFF. Residues 856–1085 are Cytoplasmic-facing; sequence NKVYIILFKP…STVTENMLRS (230 aa). The C-terminus stretch occupies residues 856–1085; that stretch reads NKVYIILFKP…STVTENMLRS (230 aa). Residues 881 to 901 are interaction with RNF19A; it reads AFKVAARATLRRSNVSRQRSS. Thr-889 carries the phosphothreonine modification. The arginine-rich retention motif stretch occupies residues 891–899; that stretch reads RRSNVSRQR. Residues Ser-893, Ser-900, and Ser-921 each carry the phosphoserine modification. Over residues 893–938 the composition is skewed to low complexity; the sequence is SNVSRQRSSSLGGSTGSTPSSSISSKSNSEDPFPQQQPKRQKQPQP. 2 disordered regions span residues 893–969 and 1034–1058; these read SNVS…PPRC and SQET…EEMS. Residues 950-960 are compositionally biased toward pro residues; sequence QPRPPSTPQPQ. Ser-1068 bears the Phosphoserine mark.

Belongs to the G-protein coupled receptor 3 family. Homodimer; disulfide-linked. Interacts with VCP. Interacts with ARRB1. In terms of processing, phosphorylation at Thr-889 by PKC impairs coupling with G(q)/G(11) G-proteins, while it does not affect G(i)/G(o)-coupling. Phosphorylation at Ser-893 by PKC and Ser-900 by PKA promote plasma membrane localization. Ubiquitinated by RNF19A; which induces proteasomal degradation.

The protein resides in the cell membrane. Its activity is regulated as follows. In resting state, adopts an open conformation, anion-binding promoting the inactive configuration. Upon aromatic amino acid-binding, the groove in the extracellular venus flytrap module is closed, thereby inducing the formation of a novel homodimer interface between subunits. Calcium ions stabilize the active state by enhancing homodimer interactions between membrane-proximal domains to fully activate the receptor. Upon activation, the homodimer adopts an asymmetric configuration of the 7-transmembrane region that primes one protomer for G-protein coupling. G-protein binding expands the transmembrane dimer interface; the restriction imposed by the receptor dimer, in combination with intracellular loop 2 (ICL2), enables G-protein activation by facilitating conformational transition of G-protein alpha. Coupling to different classes of G-proteins results in distinct CASR-G-protein interfaces. In terms of biological role, G-protein-coupled receptor that senses changes in the extracellular concentration of calcium ions and plays a key role in maintaining calcium homeostasis. Senses fluctuations in the circulating calcium concentration: activated by elevated circulating calcium, leading to decreased parathyroid hormone (PTH) secretion in parathyroid glands. In kidneys, acts as a key regulator of renal tubular calcium resorption. Ligand binding causes a conformation change that triggers signaling via guanine nucleotide-binding proteins (G-proteins) and modulates the activity of downstream effectors. CASR is coupled with different G(q)/G(11), G(i)/G(o)- or G(s)-classes of G-proteins depending on the context. In the parathyroid and kidney, CASR signals through G(q)/G(11) and G(i)/G(o) G-proteins: G(q)/G(11) coupling activates phospholipase C-beta, releasing diacylglycerol (DAG) and inositol 1,4,5-trisphosphate (IP3) second messengers, while G(i)/G(o) coupling mediates inhibition of adenylate cyclase activity. The G-protein-coupled receptor activity is activated by a co-agonist mechanism: aromatic amino acids, such as Trp or Phe, act concertedly with divalent cations, such as calcium or magnesium, to achieve full receptor activation. Acts as an activator of the NLRP3 inflammasome via G(i)/G(o)-mediated signaling: down-regulation of cyclic AMP (cAMP) relieving NLRP3 inhibition by cAMP. Acts as a regulator of proton-sensing receptor GPR68 in a seesaw manner: CASR-mediated signaling inhibits GPR68 signaling in response to extracellular calcium, while GPR68 inhibits CASR in presence of extracellular protons. The sequence is that of Extracellular calcium-sensing receptor (CASR) from Bos taurus (Bovine).